The chain runs to 404 residues: Hemocyanin, beta-C chain unit G (404 aa).

Residue N38 is glycosylated (N-linked (GlcNAc...) asparagine). H50 contacts Cu cation. C56 and C65 are joined by a disulfide. N60 is a glycosylation site (N-linked (GlcNAc...) asparagine). H61 contacts Cu cation. Positions 66–68 (CIH) form a cross-link, 2'-(S-cysteinyl)-histidine (Cys-His). Cu cation-binding residues include H77, H176, H180, and H207. 2 disulfide bridges follow: C166–C233 and C320–C326. A glycan (N-linked (GlcNAc...) asparagine) is linked at N378.

This sequence belongs to the tyrosinase family. Hemocyanin subfamily. As to quaternary structure, decamers of large identical subunits (450 kDa), each containing 8 globular oxygen-binding functional units. Cu(2+) is required as a cofactor.

Its function is as follows. Hemocyanins are copper-containing oxygen carriers occurring freely dissolved in the hemolymph of many mollusks and arthropods. The polypeptide is Hemocyanin, beta-C chain unit G (Helix pomatia (Roman snail)).